The following is a 118-amino-acid chain: Non-specific lipid-transfer protein 3 (118 aa).

An N-terminal signal peptide occupies residues 1-25 (MARSMNLACVALVMCMVVIAPMAEA). 4 disulfides stabilise this stretch: C29–C76, C39–C53, C54–C99, and C74–C113.

Belongs to the plant LTP family.

Plant non-specific lipid-transfer proteins transfer phospholipids as well as galactolipids across membranes. May play a role in wax or cutin deposition in the cell walls of expanding epidermal cells and certain secretory tissues. The protein is Non-specific lipid-transfer protein 3 of Lens culinaris (Lentil).